Consider the following 444-residue polypeptide: MGKGGNQGEGAAEREVSVPTFSWEEIQKHNLRTDRWLVIDRKVYNITKWSIQHPGGQRVIGHYAGEDATDAFRAFHPDLEFVGKFLKPLLIGELAPEEPSQDHGKNSKITEDFRALRKTAEDMNLFKTNHVFFLLLLAHIIALESIAWFTVFYFGNGWIPTLITAFVLATSQAQAGWLQHDYGHLSVYRKPKWNHLVHKFVIGHLKGASANWWNHRHFQHHAKPNIFHKDPDVNMLHVFVLGEWQPIEYGKKKLKYLPYNHQHEYFFLIGPPLLIPMYFQYQIIMTMIVHKNWVDLAWAVSYYIRFFITYIPFYGILGALLFLNFIRFLESHWFVWVTQMNHIVMEIDQEAYRDWFSSQLTATCNVEQSFFNDWFSGHLNFQIEHHLFPTMPRHNLHKIAPLVKSLCAKHGIEYQEKPLLRALLDIIRSLKKSGKLWLDAYLHK.

The Cytoplasmic portion of the chain corresponds to 1–131; it reads MGKGGNQGEG…DMNLFKTNHV (131 aa). A Cytochrome b5 heme-binding domain is found at 18 to 95; that stretch reads VPTFSWEEIQ…LKPLLIGELA (78 aa). A helical transmembrane segment spans residues 132 to 152; the sequence is FFLLLLAHIIALESIAWFTVF. Over 153 to 157 the chain is Lumenal; that stretch reads YFGNG. Residues 158–178 traverse the membrane as a helical segment; that stretch reads WIPTLITAFVLATSQAQAGWL. Residues 179–264 lie on the Cytoplasmic side of the membrane; sequence QHDYGHLSVY…KYLPYNHQHE (86 aa). The short motif at 180–184 is the Histidine box-1 element; that stretch reads HDYGH. A Histidine box-2 motif is present at residues 217–221; it reads HFQHH. A helical membrane pass occupies residues 265–285; sequence YFFLIGPPLLIPMYFQYQIIM. Residues 286-305 lie on the Lumenal side of the membrane; the sequence is TMIVHKNWVDLAWAVSYYIR. The helical transmembrane segment at 306 to 326 threads the bilayer; it reads FFITYIPFYGILGALLFLNFI. At 327 to 444 the chain is on the cytoplasmic side; that stretch reads RFLESHWFVW…KLWLDAYLHK (118 aa). A Histidine box-3 motif is present at residues 382-386; it reads QIEHH.

Belongs to the fatty acid desaturase type 1 family. Expressed in a wide array of tissues, highest expression is found in liver followed by brain, lung, heart, and retina. A lower level is found in breast tumor when compared with normal tissues; lowest levels were found in patients with poor prognostic index.

The protein resides in the endoplasmic reticulum membrane. The catalysed reaction is (9Z,12Z)-octadecadienoyl-CoA + 2 Fe(II)-[cytochrome b5] + O2 + 2 H(+) = (6Z,9Z,12Z)-octadecatrienoyl-CoA + 2 Fe(III)-[cytochrome b5] + 2 H2O. It catalyses the reaction (9Z,12Z,15Z)-octadecatrienoyl-CoA + 2 Fe(II)-[cytochrome b5] + O2 + 2 H(+) = (6Z,9Z,12Z,15Z)-octadecatetraenoyl-CoA + 2 Fe(III)-[cytochrome b5] + 2 H2O. It carries out the reaction hexadecanoyl-CoA + 2 Fe(II)-[cytochrome b5] + O2 + 2 H(+) = (6Z)-hexadecenoyl-CoA + 2 Fe(III)-[cytochrome b5] + 2 H2O. The enzyme catalyses (9Z,12Z,15Z,18Z,21Z)-tetracosapentaenoyl-CoA + 2 Fe(II)-[cytochrome b5] + O2 + 2 H(+) = (6Z,9Z,12Z,15Z,18Z,21Z)-tetracosahexaenoyl-CoA + 2 Fe(III)-[cytochrome b5] + 2 H2O. The catalysed reaction is (11E)-octadecenoyl-CoA + 2 Fe(II)-[cytochrome b5] + O2 + 2 H(+) = (6Z,11E)-octadecadienoyl-CoA + 2 Fe(III)-[cytochrome b5] + 2 H2O. It catalyses the reaction (11Z,14Z)-eicosadienoyl-CoA + 2 Fe(II)-[cytochrome b5] + O2 + 2 H(+) = (8Z,11Z,14Z)-eicosatrienoyl-CoA + 2 Fe(III)-[cytochrome b5] + 2 H2O. It carries out the reaction (11Z,14Z,17Z)-eicosatrienoyl-CoA + 2 Fe(II)-[cytochrome b5] + O2 + 2 H(+) = (8Z,11Z,14Z,17Z)-eicosatetraenoyl-CoA + 2 Fe(III)-[cytochrome b5] + 2 H2O. It participates in lipid metabolism; polyunsaturated fatty acid biosynthesis. In terms of biological role, involved in the biosynthesis of highly unsaturated fatty acids (HUFA) from the essential polyunsaturated fatty acids (PUFA) linoleic acid (LA) (18:2n-6) and alpha-linolenic acid (ALA) (18:3n-3) precursors, acting as a fatty acyl-coenzyme A (CoA) desaturase that introduces a cis double bond at carbon 6 of the fatty acyl chain. Catalyzes the first and rate limiting step in this pathway which is the desaturation of LA (18:2n-6) and ALA (18:3n-3) into gamma-linoleate (GLA) (18:3n-6) and stearidonate (18:4n-3), respectively. Subsequently, in the biosynthetic pathway of HUFA n-3 series, it desaturates tetracosapentaenoate (24:5n-3) to tetracosahexaenoate (24:6n-3), which is then converted to docosahexaenoate (DHA)(22:6n-3), an important lipid for nervous system function. Desaturates hexadecanate (palmitate) to produce 6Z-hexadecenoate (sapienate), a fatty acid unique to humans and major component of human sebum, that has been implicated in the development of acne and may have potent antibacterial activity. It can also desaturate (11E)-octadecenoate (trans-vaccenoate, the predominant trans fatty acid in human milk) at carbon 6 generating (6Z,11E)-octadecadienoate. In addition to Delta-6 activity, this enzyme exhibits Delta-8 activity with slight biases toward n-3 fatty acyl-CoA substrates. In Homo sapiens (Human), this protein is Acyl-CoA 6-desaturase.